The following is a 238-amino-acid chain: Ribitol-5-phosphate cytidylyltransferase 2 (238 aa).

CTP is bound by residues 7 to 10 (LAGG) and 81 to 87 (GTDRNET).

It belongs to the IspD/TarI cytidylyltransferase family. TarI subfamily.

The enzyme catalyses D-ribitol 5-phosphate + CTP + H(+) = CDP-L-ribitol + diphosphate. Its pathway is cell wall biogenesis; poly(ribitol phosphate) teichoic acid biosynthesis. In terms of biological role, catalyzes the transfer of the cytidylyl group of CTP to D-ribitol 5-phosphate. The sequence is that of Ribitol-5-phosphate cytidylyltransferase 2 from Staphylococcus aureus (strain MSSA476).